Reading from the N-terminus, the 468-residue chain is MRTFSGKRSTLALAIAGVTAMSGFMAMPEARAEGFIDDSTLTGGIYYWQRERDRKDVTDGDKYKTNLSHSTWNANLDFQSGYAADMFGLDIAAFTAIEMAENGDSSHPNEIAFSKSNKAYDEDWSGDKSGISLYKAAAKFKYGPVWARAGYIQPTGQTLLAPHWSFMPGTYQGAEAGANFDYGDAGALSFSYMWTNEYKAPWHLEMDEFYQNDKTTKVDYLHSFGAKYDFKNNFVLEAAFGQAEGYIDQYFAKASYKFDIAGSPLTTSYQFYGTRDKVDDRSVNDLYDGTAWLQALTFGYRAADVVDLRLEGTWVKADGQQGYFLQRMTPTYASSNGRLDIWWDNRSDFNANGEKAVFFGAMYDLKNWNLPGFAIGASYVYAWDAKPATWQSNPDAYYDKNRTIEESAYSLDAVYTIQDGRAKGTMFKLHFTEYDNHSDIPSWGGGYGNIFQDERDVKFMVIAPFTIF.

Positions 1–32 are cleaved as a signal peptide; the sequence is MRTFSGKRSTLALAIAGVTAMSGFMAMPEARA.

The protein belongs to the outer membrane porin (Opr) (TC 1.B.25) family.

The protein localises to the cell outer membrane. Involved in the uptake of chitosugars. This Escherichia coli (strain K12) protein is Chitoporin (chiP).